The sequence spans 428 residues: Trigger factor (428 aa).

Positions 163-248 (GDTAIIDFEG…INDVKVKELS (86 aa)) constitute a PPIase FKBP-type domain.

Belongs to the FKBP-type PPIase family. Tig subfamily.

It is found in the cytoplasm. The enzyme catalyses [protein]-peptidylproline (omega=180) = [protein]-peptidylproline (omega=0). Involved in protein export. Acts as a chaperone by maintaining the newly synthesized protein in an open conformation. Functions as a peptidyl-prolyl cis-trans isomerase. This is Trigger factor from Clostridioides difficile (strain 630) (Peptoclostridium difficile).